The following is a 154-amino-acid chain: Interleukin-2 (154 aa).

Positions 1–20 (MYKLQLLSCIALTLALVANS) are cleaved as a signal peptide. O-linked (GalNAc...) threonine glycosylation occurs at Thr-23. A disulfide bond links Cys-78 and Cys-126.

Belongs to the IL-2 family.

The protein localises to the secreted. Functionally, cytokine produced by activated CD4-positive helper T-cells and to a lesser extend activated CD8-positive T-cells and natural killer (NK) cells that plays pivotal roles in the immune response and tolerance. Binds to a receptor complex composed of either the high-affinity trimeric IL-2R (IL2RA/CD25, IL2RB/CD122 and IL2RG/CD132) or the low-affinity dimeric IL-2R (IL2RB and IL2RG). Interaction with the receptor leads to oligomerization and conformation changes in the IL-2R subunits resulting in downstream signaling starting with phosphorylation of JAK1 and JAK3. In turn, JAK1 and JAK3 phosphorylate the receptor to form a docking site leading to the phosphorylation of several substrates including STAT5. This process leads to activation of several pathways including STAT, phosphoinositide-3-kinase/PI3K and mitogen-activated protein kinase/MAPK pathways. Functions as a T-cell growth factor and can increase NK-cell cytolytic activity as well. Promotes strong proliferation of activated B-cells and subsequently immunoglobulin production. Plays a pivotal role in regulating the adaptive immune system by controlling the survival and proliferation of regulatory T-cells, which are required for the maintenance of immune tolerance. Moreover, participates in the differentiation and homeostasis of effector T-cell subsets, including Th1, Th2, Th17 as well as memory CD8-positive T-cells. This is Interleukin-2 (IL2) from Lama glama (Llama).